The chain runs to 210 residues: Uracil phosphoribosyltransferase (210 aa).

5-phospho-alpha-D-ribose 1-diphosphate-binding positions include R78, R103, and 130–138 (DPMLATGGS). Uracil contacts are provided by residues I193 and 198–200 (GDA). D199 contributes to the 5-phospho-alpha-D-ribose 1-diphosphate binding site.

Belongs to the UPRTase family. Requires Mg(2+) as cofactor.

The enzyme catalyses UMP + diphosphate = 5-phospho-alpha-D-ribose 1-diphosphate + uracil. Its pathway is pyrimidine metabolism; UMP biosynthesis via salvage pathway; UMP from uracil: step 1/1. Allosterically activated by GTP. In terms of biological role, catalyzes the conversion of uracil and 5-phospho-alpha-D-ribose 1-diphosphate (PRPP) to UMP and diphosphate. This is Uracil phosphoribosyltransferase from Chromobacterium violaceum (strain ATCC 12472 / DSM 30191 / JCM 1249 / CCUG 213 / NBRC 12614 / NCIMB 9131 / NCTC 9757 / MK).